The chain runs to 173 residues: 6,7-dimethyl-8-ribityllumazine synthase (173 aa).

Residues Phe-24, 58-60 (ALE), and 82-84 (AVI) each bind 5-amino-6-(D-ribitylamino)uracil. 87-88 (ET) provides a ligand contact to (2S)-2-hydroxy-3-oxobutyl phosphate. Residue His-90 is the Proton donor of the active site. Asn-115 lines the 5-amino-6-(D-ribitylamino)uracil pocket. (2S)-2-hydroxy-3-oxobutyl phosphate is bound at residue Arg-129. A disordered region spans residues 150–173 (ALEPEEDDEDDEDEDFDDEEDDGR). Residues 152-173 (EPEEDDEDDEDEDFDDEEDDGR) show a composition bias toward acidic residues.

Belongs to the DMRL synthase family.

It catalyses the reaction (2S)-2-hydroxy-3-oxobutyl phosphate + 5-amino-6-(D-ribitylamino)uracil = 6,7-dimethyl-8-(1-D-ribityl)lumazine + phosphate + 2 H2O + H(+). It functions in the pathway cofactor biosynthesis; riboflavin biosynthesis; riboflavin from 2-hydroxy-3-oxobutyl phosphate and 5-amino-6-(D-ribitylamino)uracil: step 1/2. Functionally, catalyzes the formation of 6,7-dimethyl-8-ribityllumazine by condensation of 5-amino-6-(D-ribitylamino)uracil with 3,4-dihydroxy-2-butanone 4-phosphate. This is the penultimate step in the biosynthesis of riboflavin. In Bordetella pertussis (strain Tohama I / ATCC BAA-589 / NCTC 13251), this protein is 6,7-dimethyl-8-ribityllumazine synthase.